The following is a 930-amino-acid chain: A disintegrin and metalloproteinase with thrombospondin motifs 5 (930 aa).

An N-terminal signal peptide occupies residues 1-16 (MLLGWASLLLCAFRLP). A propeptide spanning residues 17-261 (LAAVGPAATP…PQTWWRRRRR (245 aa)) is cleaved from the precursor. Disordered stretches follow at residues 24–69 (ATPA…QRRR) and 206–231 (RASCETPASTPEAHEHAPAHSNPSGR). The span at 31 to 42 (AGQPPTAAAAAQ) shows a compositional bias: low complexity. A compositionally biased stretch (basic and acidic residues) spans 46–59 (RQGEEVQERAEPPG). Positions 207 to 214 (ASCETPAS) match the Cysteine switch motif. Cysteine 209 is a binding site for Zn(2+). Residues 267–476 (RQVELLLVAD…GHGNCLLDLP (210 aa)) enclose the Peptidase M12B domain. Disulfide bonds link cysteine 342–cysteine 394, cysteine 371–cysteine 376, cysteine 388–cysteine 471, cysteine 426–cysteine 455, cysteine 497–cysteine 519, cysteine 508–cysteine 529, cysteine 514–cysteine 548, and cysteine 542–cysteine 553. Histidine 410 is a binding site for Zn(2+). Glutamate 411 is an active-site residue. 2 residues coordinate Zn(2+): histidine 414 and histidine 420. In terms of domain architecture, Disintegrin spans 485-566 (ELPGQTYDAT…TKKKYYSTSS (82 aa)). Asparagine 498 carries an N-linked (GlcNAc...) asparagine glycan. One can recognise a TSP type-1 1 domain in the interval 567-622 (HGNWGSWGSWGQCSRSCGGGVQFAYRHCNNPAPRNNGRYCTGKRAIYRSCSLMPCP). 2 C-linked (Man) tryptophan glycosylation sites follow: tryptophan 570 and tryptophan 573. 3 cysteine pairs are disulfide-bonded: cysteine 579–cysteine 616, cysteine 583–cysteine 621, and cysteine 594–cysteine 606. The O-linked (Fuc...) serine glycan is linked to serine 582. 3 N-linked (GlcNAc...) asparagine glycosylation sites follow: asparagine 728, asparagine 802, and asparagine 807. Positions 732-874 (TKIVGTFNKK…HGSNKVGSHT (143 aa)) are spacer. Residues 875 to 929 (SQPQWVTGPWLACSRTCDTGWHTRTVQCQDGNRKLAKGCPLSQRPSAFKQCLLKK) enclose the TSP type-1 2 domain.

Requires Zn(2+) as cofactor. Post-translationally, the precursor is cleaved by furin and PCSK7 outside of the cell. In terms of processing, glycosylated. Can be O-fucosylated by POFUT2 on a serine or a threonine residue found within the consensus sequence C1-X(2)-(S/T)-C2-G of the TSP type-1 repeat domains where C1 and C2 are the first and second cysteine residue of the repeat, respectively. Fucosylated repeats can then be further glycosylated by the addition of a beta-1,3-glucose residue by the glucosyltransferase, B3GALTL. Fucosylation mediates the efficient secretion of ADAMTS family members. Can also be C-glycosylated with one or two mannose molecules on tryptophan residues within the consensus sequence W-X-X-W of the TPRs, and N-glycosylated. These other glycosylations can also facilitate secretion. As to expression, expressed at low level in placenta primarily but also detected in heart and brain, cervix, uterus, bladder, esophagus, rib cartilage, chondroblastoma, fibrous tissue and a joint capsule from an arthritic patient.

It is found in the secreted. The protein localises to the extracellular space. Its subcellular location is the extracellular matrix. Functionally, metalloproteinase that plays an important role in connective tissue organization, development, inflammation and cell migration. Extracellular matrix (ECM) degrading enzyme that show proteolytic activity toward the hyalectan group of chondroitin sulfate proteoglycans (CSPGs) including ACAN, VCAN, BCAN and NCAN. Cleavage within the hyalectans occurs at Glu-Xaa recognition motifs. Plays a role in embryonic development, including limb and cardiac morphogenesis, and skeletal muscle development through its VCAN remodeling properties. Cleaves VCAN in the pericellular matrix surrounding myoblasts, facilitating myoblast contact and fusion which is required for skeletal muscle development and regeneration. Participates in development of brown adipose tissue and browning of white adipose tissue. Plays an important role for T-lymphocyte migration from draining lymph nodes following viral infection. The polypeptide is A disintegrin and metalloproteinase with thrombospondin motifs 5 (ADAMTS5) (Homo sapiens (Human)).